A 119-amino-acid chain; its full sequence is Small ribosomal subunit protein bS6 (119 aa).

The disordered stretch occupies residues Val96 to Ala119.

It belongs to the bacterial ribosomal protein bS6 family.

Functionally, binds together with bS18 to 16S ribosomal RNA. This chain is Small ribosomal subunit protein bS6, found in Alkalilimnicola ehrlichii (strain ATCC BAA-1101 / DSM 17681 / MLHE-1).